The sequence spans 429 residues: WRKY transcription factor 44 (429 aa).

A DNA-binding region (WRKY 1) is located at residues T159–P223. Zn(2+) contacts are provided by C190, C195, H218, and H220. Disordered regions lie at residues Y214 to K279 and A292 to L348. Polar residues-rich tracts occupy residues Q254–N275, R295–C313, and S334–S345. The segment at residues V343–L408 is a DNA-binding region (WRKY 2). Zn(2+) contacts are provided by C374, C379, H403, and H405. The segment covering S410–P422 has biased composition (low complexity). A disordered region spans residues S410–I429.

The protein belongs to the WRKY group I family. As to expression, leaf promordia, trichomes, atrichoblasts, fertilized eggs, seed coat.

Its subcellular location is the nucleus. Its function is as follows. Transcription factor. Interacts specifically with the W box (5'-(T)TGAC[CT]-3'), a frequently occurring elicitor-responsive cis-acting element. Regulates trichome development, production of mucilage and tannin in seed coats, and maybe root hair development. This is WRKY transcription factor 44 (WRKY44) from Arabidopsis thaliana (Mouse-ear cress).